We begin with the raw amino-acid sequence, 220 residues long: Ribosome biogenesis protein 15 (220 aa).

The segment at 1 to 82 is disordered; that stretch reads MVKSTSKTST…KQANEKKSKD (82 aa). The segment covering 9–30 has biased composition (basic and acidic residues); the sequence is STKETVTKQPTEEKPIQEKEEL. The span at 39–60 shows a compositional bias: acidic residues; it reads SDEEDEKDEDEIEGLAASDDEQ. The RRM domain maps to 91–169; the sequence is GIIYVSRLPH…HLLQVRVLPK (79 aa).

In terms of assembly, component of the pre-66S ribosomal particle. Interacts with NOP7 and RRP1.

It is found in the cytoplasm. The protein resides in the nucleus. Its subcellular location is the nucleolus. Involved in the biogenesis of the 60S ribosomal subunit. Required for pre-rRNA processing and cytokinesis. Associates with the precursors of the 25S and 5.8S rRNAs. The polypeptide is Ribosome biogenesis protein 15 (Saccharomyces cerevisiae (strain ATCC 204508 / S288c) (Baker's yeast)).